The primary structure comprises 417 residues: Serine hydroxymethyltransferase (417 aa).

Lys-54 carries the post-translational modification N6-acetyllysine. (6S)-5,6,7,8-tetrahydrofolate-binding positions include Leu-121 and Gly-125 to Leu-127. Lys-229 carries the post-translational modification N6-(pyridoxal phosphate)lysine. N6-acetyllysine occurs at positions 250, 285, and 354. Ser-355–Phe-357 contributes to the (6S)-5,6,7,8-tetrahydrofolate binding site. N6-acetyllysine is present on Lys-375.

This sequence belongs to the SHMT family. In terms of assembly, homodimer. Pyridoxal 5'-phosphate is required as a cofactor.

It localises to the cytoplasm. The enzyme catalyses (6R)-5,10-methylene-5,6,7,8-tetrahydrofolate + glycine + H2O = (6S)-5,6,7,8-tetrahydrofolate + L-serine. It participates in one-carbon metabolism; tetrahydrofolate interconversion. Its pathway is amino-acid biosynthesis; glycine biosynthesis; glycine from L-serine: step 1/1. In terms of biological role, catalyzes the reversible interconversion of serine and glycine with tetrahydrofolate (THF) serving as the one-carbon carrier. This reaction serves as the major source of one-carbon groups required for the biosynthesis of purines, thymidylate, methionine, and other important biomolecules. Also exhibits THF-independent aldolase activity toward beta-hydroxyamino acids, producing glycine and aldehydes, via a retro-aldol mechanism. The polypeptide is Serine hydroxymethyltransferase (Shigella dysenteriae serotype 1 (strain Sd197)).